A 505-amino-acid polypeptide reads, in one-letter code: Catalase (505 aa).

Active-site residues include histidine 58 and asparagine 131. Tyrosine 341 serves as a coordination point for heme.

It belongs to the catalase family. It depends on heme as a cofactor.

The catalysed reaction is 2 H2O2 = O2 + 2 H2O. Decomposes hydrogen peroxide into water and oxygen; serves to protect cells from the toxic effects of hydrogen peroxide. In Methanosarcina barkeri (strain Fusaro / DSM 804), this protein is Catalase (kat).